A 137-amino-acid chain; its full sequence is Peptide methionine sulfoxide reductase MsrB (137 aa).

Residues 1-33 (MSNNQDRPGQITDESLRERLSPEAYAVTRRAGT) form a disordered region. The 123-residue stretch at 13–135 (DESLRERLSP…NSLSLDFKAA (123 aa)) folds into the MsrB domain. The Zn(2+) site is built by cysteine 52, cysteine 55, cysteine 101, and cysteine 104. The Nucleophile role is filled by cysteine 124.

Belongs to the MsrB Met sulfoxide reductase family. The cofactor is Zn(2+).

It catalyses the reaction L-methionyl-[protein] + [thioredoxin]-disulfide + H2O = L-methionyl-(R)-S-oxide-[protein] + [thioredoxin]-dithiol. The polypeptide is Peptide methionine sulfoxide reductase MsrB (Thioalkalivibrio sulfidiphilus (strain HL-EbGR7)).